Reading from the N-terminus, the 416-residue chain is Tryptophan synthase beta chain (416 aa).

N6-(pyridoxal phosphate)lysine is present on Lys109.

The protein belongs to the TrpB family. As to quaternary structure, tetramer of two alpha and two beta chains. Pyridoxal 5'-phosphate serves as cofactor.

It carries out the reaction (1S,2R)-1-C-(indol-3-yl)glycerol 3-phosphate + L-serine = D-glyceraldehyde 3-phosphate + L-tryptophan + H2O. Its pathway is amino-acid biosynthesis; L-tryptophan biosynthesis; L-tryptophan from chorismate: step 5/5. In terms of biological role, the beta subunit is responsible for the synthesis of L-tryptophan from indole and L-serine. In Prochlorococcus marinus (strain SARG / CCMP1375 / SS120), this protein is Tryptophan synthase beta chain.